The chain runs to 436 residues: Gamma-glutamyl phosphate reductase (436 aa).

It belongs to the gamma-glutamyl phosphate reductase family.

The protein resides in the cytoplasm. It carries out the reaction L-glutamate 5-semialdehyde + phosphate + NADP(+) = L-glutamyl 5-phosphate + NADPH + H(+). The protein operates within amino-acid biosynthesis; L-proline biosynthesis; L-glutamate 5-semialdehyde from L-glutamate: step 2/2. Its function is as follows. Catalyzes the NADPH-dependent reduction of L-glutamate 5-phosphate into L-glutamate 5-semialdehyde and phosphate. The product spontaneously undergoes cyclization to form 1-pyrroline-5-carboxylate. This Polaromonas sp. (strain JS666 / ATCC BAA-500) protein is Gamma-glutamyl phosphate reductase.